Here is a 297-residue protein sequence, read N- to C-terminus: tRNA dimethylallyltransferase (297 aa).

8-15 (GATASGKS) provides a ligand contact to ATP. Position 10 to 15 (10 to 15 (TASGKS)) interacts with substrate. Positions 33–36 (DSLS) are interaction with substrate tRNA.

Belongs to the IPP transferase family. As to quaternary structure, monomer. The cofactor is Mg(2+).

It carries out the reaction adenosine(37) in tRNA + dimethylallyl diphosphate = N(6)-dimethylallyladenosine(37) in tRNA + diphosphate. Its function is as follows. Catalyzes the transfer of a dimethylallyl group onto the adenine at position 37 in tRNAs that read codons beginning with uridine, leading to the formation of N6-(dimethylallyl)adenosine (i(6)A). The polypeptide is tRNA dimethylallyltransferase (Sulfurimonas denitrificans (strain ATCC 33889 / DSM 1251) (Thiomicrospira denitrificans (strain ATCC 33889 / DSM 1251))).